The following is a 287-amino-acid chain: Ethylene-inducing xylanase 3 (287 aa).

An N-terminal signal peptide occupies residues 1–19; the sequence is MVCFSSLFVAASAIAVVFA. The region spanning 31–219 is the GH11 domain; the sequence is QSTPSSQGTH…SSGSARINVA (189 aa). Residue glutamate 115 is the Nucleophile of the active site. Glutamate 206 acts as the Proton donor in catalysis. The CBM1 domain maps to 252 to 287; sequence SCAARWGQCGGSGWNGATCCSAGTCQAQNQWYSQCL.

Belongs to the glycosyl hydrolase 11 (cellulase G) family.

The catalysed reaction is Endohydrolysis of (1-&gt;4)-beta-D-xylosidic linkages in xylans.. It functions in the pathway glycan degradation; xylan degradation. Functionally, endo-1,4-beta-xylanase involved in the hydrolysis of xylan, a major structural heterogeneous polysaccharide found in plant biomass representing the second most abundant polysaccharide in the biosphere, after cellulose. Exhibits immunity-inducing activity and induces cell death in Nicotiana benthamiana. This chain is Ethylene-inducing xylanase 3, found in Verticillium longisporum (Verticillium dahliae var. longisporum).